Here is a 557-residue protein sequence, read N- to C-terminus: Anthrax toxin receptor-like (557 aa).

An N-terminal signal peptide occupies residues 1–25; sequence MRSHGRWGPCFLLFLLLLPPPLFRA. At 26 to 345 the chain is on the extracellular side; sequence GSLRYHGPGW…KSNVSVTSST (320 aa). Residues 74–244 enclose the VWFA domain; sequence DLYFILDKSG…KAMRDTVDAL (171 aa). A divalent metal cation is bound by residues S82, S84, and T148. Residues 346 to 366 form a helical membrane-spanning segment; that stretch reads CGIFSNWLYFLLPLLLLPLLL. Topologically, residues 367–557 are cytoplasmic; it reads CCLWRLCRKK…PTSKAPNTQD (191 aa). Disordered regions lie at residues 380–411 and 497–557; these read EPPPVQKPEKEPEQEKPPPPPPPSPPPPLPPP and ESPS…NTQD. Residues 386 to 395 show a composition bias toward basic and acidic residues; the sequence is KPEKEPEQEK. The segment covering 396 to 411 has biased composition (pro residues); sequence PPPPPPPSPPPPLPPP. The span at 534 to 557 shows a compositional bias: polar residues; it reads GTLQNPLCPSLPRSPTSKAPNTQD.

It belongs to the ATR family.

The protein localises to the membrane. The polypeptide is Anthrax toxin receptor-like (ANTXRL) (Macaca fascicularis (Crab-eating macaque)).